The chain runs to 77 residues: Acyl carrier protein (77 aa).

The region spanning 2 to 77 (SSIDKRIKEI…DAIDYITDHT (76 aa)) is the Carrier domain. Serine 37 is modified (O-(pantetheine 4'-phosphoryl)serine).

This sequence belongs to the acyl carrier protein (ACP) family. Post-translationally, 4'-phosphopantetheine is transferred from CoA to a specific serine of apo-ACP by AcpS. This modification is essential for activity because fatty acids are bound in thioester linkage to the sulfhydryl of the prosthetic group.

The protein resides in the cytoplasm. It functions in the pathway lipid metabolism; fatty acid biosynthesis. Functionally, carrier of the growing fatty acid chain in fatty acid biosynthesis. This Geotalea uraniireducens (strain Rf4) (Geobacter uraniireducens) protein is Acyl carrier protein.